The primary structure comprises 405 residues: Glucose-1-phosphate adenylyltransferase (405 aa).

Alpha-D-glucose 1-phosphate contacts are provided by residues Y96, G161, 176–177 (EK), and S194.

This sequence belongs to the bacterial/plant glucose-1-phosphate adenylyltransferase family. Homotetramer.

The catalysed reaction is alpha-D-glucose 1-phosphate + ATP + H(+) = ADP-alpha-D-glucose + diphosphate. Its pathway is glycan biosynthesis; glycogen biosynthesis. In terms of biological role, involved in the biosynthesis of ADP-glucose, a building block required for the elongation reactions to produce glycogen. Catalyzes the reaction between ATP and alpha-D-glucose 1-phosphate (G1P) to produce pyrophosphate and ADP-Glc. The chain is Glucose-1-phosphate adenylyltransferase from Photobacterium profundum (strain SS9).